The chain runs to 371 residues: MCGSPNTTVGNGTRALILVGGYGTRLRPLTLSTPKPLVEFANKPILLHQLEALVDAGCRQVILAVSYRAEQMEKELKVEADKLGVELIFSHETEPLGTAGPLALAKSILSASPEPFFVLNSDVICDFPFKQLVQFHRNHGKEGTIVVTKVEEPSKYGVVLYDEDGCIKNFIEKPQEFVSNKINAGIYIFNPSVLERIEVKPTSIEKEVFPAMAEQQELYAMDLTGFWMDIGQPKDFLTGMCLYLSSLRQKQSPKLYTGPGVVGNVLVDPTATIGEGCRIGPNVTIGPDVIIEDGVCIKRATILKGAIVRSHSWLDSCIVGWRSTVGRWVRIEGITVLGEDVIVKDELYVNGGQVLPHKSIAASVPEPQIIM.

The substrate-binding domain stretch occupies residues R14–P233. D122 is a GDP-alpha-D-mannose binding site. A Mg(2+)-binding site is contributed by D122. Residue K173 is part of the active site. D229 serves as a coordination point for GDP-alpha-D-mannose. Position 229 (D229) interacts with Mg(2+). Residues Y256–M371 are hexapeptide repeat domain.

It belongs to the transferase hexapeptide repeat family. As to quaternary structure, component of the GMPPA-GMPPB mannose-1-phosphate guanylyltransferase complex composed of 4 Gmppa subunits and 8 Gmppb subunits; the complex is organized into three layers, a central layer made up of 2 Gmppa dimers sandwiched between two layers each made up of 2 Gmppb dimers. Gmppb catalytic activity is reduced when part of the complex and binding of GDP-alpha-D-Mannose by Gmppa induces allosteric feedback inhibition of Gmppb. It depends on Mg(2+) as a cofactor.

It catalyses the reaction alpha-D-mannose 1-phosphate + GTP + H(+) = GDP-alpha-D-mannose + diphosphate. The protein operates within nucleotide-sugar biosynthesis; GDP-alpha-D-mannose biosynthesis; GDP-alpha-D-mannose from alpha-D-mannose 1-phosphate (GTP route): step 1/1. Its activity is regulated as follows. Enzyme activity is reduced by incorporation into the GMPPA-GMPPB mannose-1-phosphate guanylyltransferase complex. Allosterically inhibited, when part of the GMPPA-GMPPB complex, by GDP-alpha-D-mannose binding to Gmppa. In terms of biological role, catalytic subunit of the GMPPA-GMPPB mannose-1-phosphate guanylyltransferase complex. Catalyzes the formation of GDP-mannose, an essential precursor of glycan moieties of glycoproteins and glycolipids. Can catalyze the reverse reaction in vitro. Together with GMPPA regulates GDP-alpha-D-mannose levels. The chain is Mannose-1-phosphate guanylyltransferase catalytic subunit beta from Drosophila pseudoobscura pseudoobscura (Fruit fly).